A 498-amino-acid chain; its full sequence is Probable cytosol aminopeptidase (498 aa).

Residues K263 and D268 each coordinate Mn(2+). The active site involves K275. Residues D286, D345, and E347 each coordinate Mn(2+). R349 is a catalytic residue.

Belongs to the peptidase M17 family. It depends on Mn(2+) as a cofactor.

It is found in the cytoplasm. The enzyme catalyses Release of an N-terminal amino acid, Xaa-|-Yaa-, in which Xaa is preferably Leu, but may be other amino acids including Pro although not Arg or Lys, and Yaa may be Pro. Amino acid amides and methyl esters are also readily hydrolyzed, but rates on arylamides are exceedingly low.. It carries out the reaction Release of an N-terminal amino acid, preferentially leucine, but not glutamic or aspartic acids.. Presumably involved in the processing and regular turnover of intracellular proteins. Catalyzes the removal of unsubstituted N-terminal amino acids from various peptides. The protein is Probable cytosol aminopeptidase of Rhodopseudomonas palustris (strain BisA53).